A 31-amino-acid chain; its full sequence is Photosystem II reaction center protein T (31 aa).

A helical transmembrane segment spans residues 3–23; that stretch reads SLVYIFVFVVALGVLFFAIAF.

Belongs to the PsbT family. As to quaternary structure, PSII is composed of 1 copy each of membrane proteins PsbA, PsbB, PsbC, PsbD, PsbE, PsbF, PsbH, PsbI, PsbJ, PsbK, PsbL, PsbM, PsbT, PsbX, PsbY, PsbZ, Psb30/Ycf12, peripheral proteins PsbO, CyanoQ (PsbQ), PsbU, PsbV and a large number of cofactors. It forms dimeric complexes.

Its subcellular location is the cellular thylakoid membrane. In terms of biological role, found at the monomer-monomer interface of the photosystem II (PS II) dimer, plays a role in assembly and dimerization of PSII. PSII is a light-driven water plastoquinone oxidoreductase, using light energy to abstract electrons from H(2)O, generating a proton gradient subsequently used for ATP formation. The protein is Photosystem II reaction center protein T of Synechococcus elongatus (strain ATCC 33912 / PCC 7942 / FACHB-805) (Anacystis nidulans R2).